The sequence spans 258 residues: UPF0246 protein MS0374 (258 aa).

This sequence belongs to the UPF0246 family.

The sequence is that of UPF0246 protein MS0374 from Mannheimia succiniciproducens (strain KCTC 0769BP / MBEL55E).